The primary structure comprises 183 residues: UPF0316 protein EF_1609 (183 aa).

The next 3 helical transmembrane spans lie at 1–21 (MVVD…YITL), 35–55 (VIAP…LSMV), and 62–82 (PLNL…GIKI).

It belongs to the UPF0316 family.

It localises to the cell membrane. In Enterococcus faecalis (strain ATCC 700802 / V583), this protein is UPF0316 protein EF_1609.